A 502-amino-acid polypeptide reads, in one-letter code: Protein ANKUB1 (502 aa).

In Homo sapiens (Human), this protein is Protein ANKUB1 (ANKUB1).